We begin with the raw amino-acid sequence, 410 residues long: Lissencephaly-1 homolog B (410 aa).

A LisH domain is found at 7 to 39; sequence QRDELNRAIADYLRSNGYEEAYSTFKKEAELDV. Residues 56 to 82 adopt a coiled-coil conformation; the sequence is TSVIRLQKKVMELESKLNEAKEEITLG. WD repeat units lie at residues 106–147, 148–187, 190–229, 232–271, 274–333, 336–377, and 379–410; these read GHRS…RTLK, GHTD…CIRT, GHDH…CVKT, GHRE…CKAE, EHEH…CLMT, GHDN…KTLS, and HEHF…WECR.

The protein belongs to the WD repeat LIS1/nudF family. Can self-associate. Component of the cytosolic PAF-AH (I) heterotetrameric enzyme, which is composed of PAFAH1B1 (beta), PAFAH1B2 (alpha2) and PAFAH1B3 (alpha1) subunits. The catalytic activity of the enzyme resides in the alpha1 (PAFAH1B3) and alpha2 (PAFAH1B2) subunits, whereas the beta subunit (PAFAH1B1) has regulatory activity. Trimer formation is not essential for the catalytic activity. Interacts with dynein, dynactin, nde1 and ndel1. As to expression, enriched in the photoreceptor cell layer.

The protein localises to the cytoplasm. It is found in the cytoskeleton. The protein resides in the microtubule organizing center. It localises to the centrosome. Functionally, regulatory subunit (beta subunit) of the cytosolic type I platelet-activating factor (PAF) acetylhydrolase (PAF-AH (I)), an enzyme that catalyzes the hydrolyze of the acetyl group at the sn-2 position of PAF and its analogs and participates in the PAF inactivation. Regulates the PAF-AH (I) activity in a catalytic dimer composition-dependent manner. Positively regulates the activity of the minus-end directed microtubule motor protein dynein. May enhance dynein-mediated microtubule sliding by targeting dynein to the microtubule plus end. Required for several dynein- and microtubule-dependent processes such as the maintenance of Golgi integrity, the peripheral transport of microtubule fragments and the coupling of the nucleus and centrosome. May be required for proliferation of neuronal precursors and neuronal migration. Involved in the positioning of nuclei in photoreceptor cells. The chain is Lissencephaly-1 homolog B (pafah1b1b) from Danio rerio (Zebrafish).